The chain runs to 570 residues: Phosphoribosylaminoimidazole carboxylase (570 aa).

An ATP-grasp domain is found at 110 to 297 (KQHLVKNRIP…QFEAHLRAIL (188 aa)). 137–192 (GSSLGYPFVLKSRTLAYDGRGNFVVKSEEDIEKGLEFLANRPLYAEKWASFKKELS) is a binding site for ATP.

It in the C-terminal section; belongs to the AIR carboxylase family. Class I subfamily.

It carries out the reaction 5-amino-1-(5-phospho-D-ribosyl)imidazole-4-carboxylate + H(+) = 5-amino-1-(5-phospho-beta-D-ribosyl)imidazole + CO2. The protein operates within purine metabolism; IMP biosynthesis via de novo pathway; 5-amino-1-(5-phospho-D-ribosyl)imidazole-4-carboxylate from 5-amino-1-(5-phospho-D-ribosyl)imidazole (carboxylase route): step 1/1. The sequence is that of Phosphoribosylaminoimidazole carboxylase (ADE2) from Candida glabrata (strain ATCC 2001 / BCRC 20586 / JCM 3761 / NBRC 0622 / NRRL Y-65 / CBS 138) (Yeast).